The following is a 196-amino-acid chain: Pyridoxal 5'-phosphate synthase subunit PdxT (196 aa).

Residue 47 to 49 (GES) coordinates L-glutamine. Cysteine 79 acts as the Nucleophile in catalysis. Residues arginine 106 and 134-135 (IR) each bind L-glutamine. Active-site charge relay system residues include histidine 170 and glutamate 172.

Belongs to the glutaminase PdxT/SNO family. In the presence of PdxS, forms a dodecamer of heterodimers. Only shows activity in the heterodimer.

It catalyses the reaction aldehydo-D-ribose 5-phosphate + D-glyceraldehyde 3-phosphate + L-glutamine = pyridoxal 5'-phosphate + L-glutamate + phosphate + 3 H2O + H(+). It carries out the reaction L-glutamine + H2O = L-glutamate + NH4(+). The protein operates within cofactor biosynthesis; pyridoxal 5'-phosphate biosynthesis. In terms of biological role, catalyzes the hydrolysis of glutamine to glutamate and ammonia as part of the biosynthesis of pyridoxal 5'-phosphate. The resulting ammonia molecule is channeled to the active site of PdxS. The protein is Pyridoxal 5'-phosphate synthase subunit PdxT of Bacillus licheniformis (strain ATCC 14580 / DSM 13 / JCM 2505 / CCUG 7422 / NBRC 12200 / NCIMB 9375 / NCTC 10341 / NRRL NRS-1264 / Gibson 46).